The sequence spans 117 residues: Ribosome-binding factor A (117 aa).

It belongs to the RbfA family. As to quaternary structure, monomer. Binds 30S ribosomal subunits, but not 50S ribosomal subunits or 70S ribosomes.

The protein resides in the cytoplasm. Its function is as follows. One of several proteins that assist in the late maturation steps of the functional core of the 30S ribosomal subunit. Associates with free 30S ribosomal subunits (but not with 30S subunits that are part of 70S ribosomes or polysomes). Required for efficient processing of 16S rRNA. May interact with the 5'-terminal helix region of 16S rRNA. This is Ribosome-binding factor A from Blochmanniella floridana.